The primary structure comprises 78 residues: Acyl carrier protein (78 aa).

The Carrier domain occupies 2–77 (SNFEERVKKI…AAIDYVVSSA (76 aa)). Residue Ser-37 is modified to O-(pantetheine 4'-phosphoryl)serine.

The protein belongs to the acyl carrier protein (ACP) family. 4'-phosphopantetheine is transferred from CoA to a specific serine of apo-ACP by AcpS. This modification is essential for activity because fatty acids are bound in thioester linkage to the sulfhydryl of the prosthetic group.

The protein localises to the cytoplasm. The protein operates within lipid metabolism; fatty acid biosynthesis. Carrier of the growing fatty acid chain in fatty acid biosynthesis. Is probably involved in the biosynthesis of docosahexaenoic acid (DHA) which is produced by this bacterium as a fatty acyl component in its membrane lipid. This chain is Acyl carrier protein, found in Moritella marina (Vibrio marinus).